The sequence spans 227 residues: NADH-quinone oxidoreductase subunit C (227 aa).

It belongs to the complex I 30 kDa subunit family. NDH-1 is composed of 14 different subunits. Subunits NuoB, C, D, E, F, and G constitute the peripheral sector of the complex.

It localises to the cell inner membrane. The enzyme catalyses a quinone + NADH + 5 H(+)(in) = a quinol + NAD(+) + 4 H(+)(out). Its function is as follows. NDH-1 shuttles electrons from NADH, via FMN and iron-sulfur (Fe-S) centers, to quinones in the respiratory chain. The immediate electron acceptor for the enzyme in this species is believed to be ubiquinone. Couples the redox reaction to proton translocation (for every two electrons transferred, four hydrogen ions are translocated across the cytoplasmic membrane), and thus conserves the redox energy in a proton gradient. The sequence is that of NADH-quinone oxidoreductase subunit C from Legionella pneumophila (strain Paris).